The following is a 389-amino-acid chain: Probable dual-specificity RNA methyltransferase RlmN (389 aa).

The tract at residues 1 to 23 (MTTQHPDTPETGITPGGTSGAFR) is disordered. Glu127 functions as the Proton acceptor in the catalytic mechanism. Positions 133–376 (YPTRTTLCIS…ATLRDTRGQD (244 aa)) constitute a Radical SAM core domain. The cysteines at positions 140 and 381 are disulfide-linked. The [4Fe-4S] cluster site is built by Cys147, Cys151, and Cys154. S-adenosyl-L-methionine is bound by residues 202–203 (GE), Ser236, 259–261 (SLH), and Asn338. Cys381 acts as the S-methylcysteine intermediate in catalysis.

The protein belongs to the radical SAM superfamily. RlmN family. It depends on [4Fe-4S] cluster as a cofactor.

The protein localises to the cytoplasm. It catalyses the reaction adenosine(2503) in 23S rRNA + 2 reduced [2Fe-2S]-[ferredoxin] + 2 S-adenosyl-L-methionine = 2-methyladenosine(2503) in 23S rRNA + 5'-deoxyadenosine + L-methionine + 2 oxidized [2Fe-2S]-[ferredoxin] + S-adenosyl-L-homocysteine. It carries out the reaction adenosine(37) in tRNA + 2 reduced [2Fe-2S]-[ferredoxin] + 2 S-adenosyl-L-methionine = 2-methyladenosine(37) in tRNA + 5'-deoxyadenosine + L-methionine + 2 oxidized [2Fe-2S]-[ferredoxin] + S-adenosyl-L-homocysteine. Specifically methylates position 2 of adenine 2503 in 23S rRNA and position 2 of adenine 37 in tRNAs. The chain is Probable dual-specificity RNA methyltransferase RlmN from Bifidobacterium longum (strain NCC 2705).